Reading from the N-terminus, the 247-residue chain is Sulfate transporter CysZ (247 aa).

The next 5 membrane-spanning stretches (helical) occupy residues 29–49 (FVVL…FYLF), 66–86 (FLSW…LATF), 141–160 (LLYI…IPAL), 164–186 (VGPV…DYPF), and 212–232 (VLVS…PVAI).

The protein belongs to the CysZ family.

It is found in the cell inner membrane. Functionally, high affinity, high specificity proton-dependent sulfate transporter, which mediates sulfate uptake. Provides the sulfur source for the cysteine synthesis pathway. The sequence is that of Sulfate transporter CysZ from Vibrio parahaemolyticus serotype O3:K6 (strain RIMD 2210633).